Consider the following 97-residue polypeptide: Coiled-coil domain-containing protein 167 (97 aa).

A coiled-coil region spans residues 2-78 (TKKKRENLGV…LLRHENRKNT (77 aa)). The helical transmembrane segment at 78-95 (TLLSVAIFTVFALLYAYW) threads the bilayer.

The protein resides in the membrane. The polypeptide is Coiled-coil domain-containing protein 167 (Ccdc167) (Mus musculus (Mouse)).